The primary structure comprises 124 residues: Type-4 ice-structuring protein (124 aa).

An N-terminal signal peptide occupies residues 1 to 20 (MKFSLIAAVALLALAQGSFA). Gln-21 bears the Pyrrolidone carboxylic acid mark.

Belongs to the apolipoprotein A1/A4/E family.

It localises to the secreted. Antifreeze proteins lower the blood freezing point. The sequence is that of Type-4 ice-structuring protein from Paralichthys olivaceus (Bastard halibut).